The primary structure comprises 204 residues: MNFLNFSILIFAYLLGSINSAIIVCYIFRLPSPRSVGSGNPGMTNVLRIGGKVPAAITLIFDILKGLVPVVIAKVLTGNEFITACTALYAILGHIFPIFFGFKGGKGVATLIGTLFGFSWILGLIFVITWLCVAIITRYSSLSALVATVIASFSVIFTSDLQVAAPFLIIAIIILVKHKGNIQRLISRQESKIGDKAKAKNDSN.

5 helical membrane passes run 8-28 (ILIFAYLLGSINSAIIVCYIF), 53-73 (VPAAITLIFDILKGLVPVVIA), 81-101 (FITACTALYAILGHIFPIFFG), 116-136 (FGFSWILGLIFVITWLCVAII), and 155-175 (VIFTSDLQVAAPFLIIAIIIL).

This sequence belongs to the PlsY family. Probably interacts with PlsX.

It is found in the cell inner membrane. It carries out the reaction an acyl phosphate + sn-glycerol 3-phosphate = a 1-acyl-sn-glycero-3-phosphate + phosphate. Its pathway is lipid metabolism; phospholipid metabolism. Its function is as follows. Catalyzes the transfer of an acyl group from acyl-phosphate (acyl-PO(4)) to glycerol-3-phosphate (G3P) to form lysophosphatidic acid (LPA). This enzyme utilizes acyl-phosphate as fatty acyl donor, but not acyl-CoA or acyl-ACP. The sequence is that of Glycerol-3-phosphate acyltransferase from Francisella tularensis subsp. tularensis (strain FSC 198).